We begin with the raw amino-acid sequence, 426 residues long: Glutamyl-tRNA reductase (426 aa).

Substrate contacts are provided by residues 49 to 52 (TCNR), S109, 114 to 116 (EGQ), and Q120. The active-site Nucleophile is the C50. Residue 189–194 (GAGETG) coordinates NADP(+).

The protein belongs to the glutamyl-tRNA reductase family. As to quaternary structure, homodimer.

It catalyses the reaction (S)-4-amino-5-oxopentanoate + tRNA(Glu) + NADP(+) = L-glutamyl-tRNA(Glu) + NADPH + H(+). Its pathway is porphyrin-containing compound metabolism; protoporphyrin-IX biosynthesis; 5-aminolevulinate from L-glutamyl-tRNA(Glu): step 1/2. It functions in the pathway porphyrin-containing compound metabolism; chlorophyll biosynthesis. Functionally, catalyzes the NADPH-dependent reduction of glutamyl-tRNA(Glu) to glutamate 1-semialdehyde (GSA). This Prosthecochloris aestuarii (strain DSM 271 / SK 413) protein is Glutamyl-tRNA reductase.